A 216-amino-acid polypeptide reads, in one-letter code: V-type ATP synthase subunit D (216 aa).

This sequence belongs to the V-ATPase D subunit family.

In terms of biological role, produces ATP from ADP in the presence of a proton gradient across the membrane. The protein is V-type ATP synthase subunit D of Clostridium botulinum (strain Loch Maree / Type A3).